The sequence spans 45 residues: Photosystem II reaction center protein K (45 aa).

A propeptide spanning residues 1–8 is cleaved from the precursor; the sequence is MEAALLLA. Residues 24–44 traverse the membrane as a helical segment; sequence LPIIPLFFLALAFVWQAAVGF.

It belongs to the PsbK family. As to quaternary structure, PSII is composed of 1 copy each of membrane proteins PsbA, PsbB, PsbC, PsbD, PsbE, PsbF, PsbH, PsbI, PsbJ, PsbK, PsbL, PsbM, PsbT, PsbX, PsbY, PsbZ, Psb30/Ycf12, peripheral proteins PsbO, CyanoQ (PsbQ), PsbU, PsbV and a large number of cofactors. It forms dimeric complexes.

It is found in the cellular thylakoid membrane. Functionally, one of the components of the core complex of photosystem II (PSII). PSII is a light-driven water:plastoquinone oxidoreductase that uses light energy to abstract electrons from H(2)O, generating O(2) and a proton gradient subsequently used for ATP formation. It consists of a core antenna complex that captures photons, and an electron transfer chain that converts photonic excitation into a charge separation. This Rippkaea orientalis (strain PCC 8801 / RF-1) (Cyanothece sp. (strain PCC 8801)) protein is Photosystem II reaction center protein K.